Here is an 842-residue protein sequence, read N- to C-terminus: Glycogen phosphorylase, muscle form (842 aa).

Position 2 is an N-acetylserine (serine 2). Serine 15 carries the phosphoserine; by PHK; in form phosphorylase A modification. AMP is bound by residues aspartate 43 and tyrosine 76. Phosphotyrosine is present on residues tyrosine 204 and tyrosine 227. An AMP-binding site is contributed by 310-319 (RRFKSSKFGC). Serine 430 is subject to Phosphoserine. Tyrosine 473 carries the post-translational modification Phosphotyrosine. Serine 514 is subject to Phosphoserine. Residue lysine 681 is modified to N6-(pyridoxal phosphate)lysine. Phosphoserine occurs at positions 747 and 748.

Belongs to the glycogen phosphorylase family. Homodimer. Homotetramer; to form the enzymatically active phosphorylase A. Pyridoxal 5'-phosphate serves as cofactor. In terms of processing, phosphorylation of Ser-15 converts phosphorylase B (unphosphorylated) to phosphorylase A.

The catalysed reaction is [(1-&gt;4)-alpha-D-glucosyl](n) + phosphate = [(1-&gt;4)-alpha-D-glucosyl](n-1) + alpha-D-glucose 1-phosphate. Its activity is regulated as follows. Allosterically regulated through the non-covalent binding of metabolites, being activated by AMP and inhibited by ATP, ADP, and glucose-6-phosphate. The activity is also controlled by post-translational modifications including phosphorylation. Its function is as follows. Allosteric enzyme that catalyzes the rate-limiting step in glycogen catabolism, the phosphorolytic cleavage of glycogen to produce glucose-1-phosphate, and plays a central role in maintaining cellular and organismal glucose homeostasis. This Homo sapiens (Human) protein is Glycogen phosphorylase, muscle form.